Reading from the N-terminus, the 308-residue chain is MFNGEPGPASSGASRNVVRSSSISGEICGSQQAGGGAGTTTAKKRRSSLGAKMVAIVGLTQWSKSTLQLPQPEGATKKLRSNIRRSTETGIAVEMRSRVTRQGSRESTDGSTNSNSSDGTFIFPTTRLGAESQFSDFLDGLGPAQIVGRQTLATPPMGDVHIAIMDRSGQLEVEVIEARGLTPKPGSKSLPATYIKVYLLENGACLAKKKTKMTKKTCDPLYQQALLFDEGPQGKVLQVIVWGDYGRMDHKCFMGMAQIMLDELDLSAAVTGWYKLFPTSSVADSTLGSLTRRLSQSSLESATSPSCS.

Residues 86-120 are disordered; that stretch reads STETGIAVEMRSRVTRQGSRESTDGSTNSNSSDGT. Low complexity predominate over residues 109–120; sequence DGSTNSNSSDGT. The region spanning 156–274 is the C2 domain; the sequence is PMGDVHIAIM…DLSAAVTGWY (119 aa). Phosphoserine is present on residues Ser295 and Ser298.

In terms of assembly, binds PPFIA3. Does not bind RAB3.

The protein resides in the synapse. Regulates synaptic membrane exocytosis. The protein is Regulating synaptic membrane exocytosis protein 3 (RIMS3) of Homo sapiens (Human).